We begin with the raw amino-acid sequence, 354 residues long: Protein-arginine kinase (354 aa).

The Phosphagen kinase C-terminal domain occupies 24–254 (IVLSSRIRLA…QQIIQQEKMA (231 aa)). Residues 27–31 (SSRIR), His92, Arg125, 176–180 (RASVM), and 207–212 (RGIYGE) each bind ATP. An RDXXRA motif of the pArg binding pocket involved in allosteric regulation motif is present at residues 337–342 (RDYRRA).

It belongs to the ATP:guanido phosphotransferase family.

It catalyses the reaction L-arginyl-[protein] + ATP = N(omega)-phospho-L-arginyl-[protein] + ADP + H(+). Appears to be allosterically activated by the binding of pArg-containing polypeptides to the pArg-binding pocket localized in the C-terminal domain of McsB. Functionally, catalyzes the specific phosphorylation of arginine residues in a large number of proteins. Is part of the bacterial stress response system. Protein arginine phosphorylation has a physiologically important role and is involved in the regulation of many critical cellular processes, such as protein homeostasis, motility, competence, and stringent and stress responses, by regulating gene expression and protein activity. The sequence is that of Protein-arginine kinase from Bacillus thuringiensis subsp. konkukian (strain 97-27).